The primary structure comprises 292 residues: Techylectin-5A (292 aa).

The signal sequence occupies residues Met-1–Ser-23. Gln-24 carries the pyrrolidone carboxylic acid modification. Positions Pro-63–Glu-286 constitute a Fibrinogen C-terminal domain. A disulfide bond links Cys-72 and Cys-103. Asn-173, Asn-198, and Asn-214 each carry an N-linked (GlcNAc...) asparagine glycan. Residues Asp-221, His-225, and Thr-227 each contribute to the Ca(2+) site. A disulfide bond links Cys-229 and Cys-242.

Multimeric. PubMed:10468566 and PubMed:11707569 are in disagreement about the nature of the multimer, PubMed:10468566 finds hexamers and octamers, the results in PubMed:11707569 suggest tetramers. In terms of tissue distribution, strongly expressed in heart and intestine, weakly expressed in hepatopancreas. Not found in hemocytes, stomach, nervous tissue or skeletal muscle.

Its subcellular location is the secreted. Its function is as follows. Lectin involved in innate immunity. Agglutinates all types of human erythrocytes, Gram-positive and Gram-negative bacteria. Has a stronger agglutinating activity towards Gram-negative bacteria than towards Gram-positive bacteria. Specifically recognizes acetyl group-containing substances on agglutinated cells. The hemagglutinating activity was inhibited by EDTA, acetyl group-containing mono- and disaccharides, N-acetyl derivatives of amino acids, other acetyl group-containing substances, propionamide and benzamide. Enhances the antimicrobial activity of big defensin against Gram-positive bacteria but not against Gram-negative bacteria. The polypeptide is Techylectin-5A (Tachypleus tridentatus (Japanese horseshoe crab)).